Consider the following 618-residue polypeptide: Crinkler effector protein 16 (618 aa).

Residues 1–19 (MVVVSLQCAIVGQAGSSFD) form the signal peptide. The segment at 18–57 (FDVEIDDGAKVSKLKDAIKAKKPNDFKVVDADKLHLFLAK) is LQLFLAK domain. The tract at residues 58–139 (QPVEDESGKE…NMELPSSEQI (82 aa)) is DWL domain. An HVLVXXP motif motif is present at residues 140 to 146 (HVLVVVP). An N-linked (GlcNAc...) asparagine glycan is attached at asparagine 534.

The protein belongs to the Crinkler effector family.

The protein localises to the secreted. It localises to the host nucleus. In terms of biological role, secreted effector that elicits necrosis in host plants, a characteristic of plant innate immunity. The chain is Crinkler effector protein 16 from Phytophthora infestans (Potato late blight agent).